The following is a 200-amino-acid chain: Adenylyl-sulfate kinase (200 aa).

35 to 42 (GLPASGKS) is a binding site for ATP. Catalysis depends on Ser-109, which acts as the Phosphoserine intermediate.

Belongs to the APS kinase family.

It carries out the reaction adenosine 5'-phosphosulfate + ATP = 3'-phosphoadenylyl sulfate + ADP + H(+). Its pathway is sulfur metabolism; hydrogen sulfide biosynthesis; sulfite from sulfate: step 2/3. Catalyzes the synthesis of activated sulfate. This chain is Adenylyl-sulfate kinase, found in Thermodesulfovibrio yellowstonii (strain ATCC 51303 / DSM 11347 / YP87).